Consider the following 209-residue polypeptide: FMN-dependent NADH:quinone oxidoreductase (209 aa).

Residues S9, 19–21, and 143–146 contribute to the FMN site; these read SVS and TRGG.

The protein belongs to the azoreductase type 1 family. Homodimer. FMN serves as cofactor.

It catalyses the reaction 2 a quinone + NADH + H(+) = 2 a 1,4-benzosemiquinone + NAD(+). The enzyme catalyses N,N-dimethyl-1,4-phenylenediamine + anthranilate + 2 NAD(+) = 2-(4-dimethylaminophenyl)diazenylbenzoate + 2 NADH + 2 H(+). In terms of biological role, quinone reductase that provides resistance to thiol-specific stress caused by electrophilic quinones. Its function is as follows. Also exhibits azoreductase activity. Catalyzes the reductive cleavage of the azo bond in aromatic azo compounds to the corresponding amines. The sequence is that of FMN-dependent NADH:quinone oxidoreductase from Leptothrix cholodnii (strain ATCC 51168 / LMG 8142 / SP-6) (Leptothrix discophora (strain SP-6)).